The primary structure comprises 119 residues: Ribonuclease P protein component (119 aa).

Belongs to the RnpA family. Consists of a catalytic RNA component (M1 or rnpB) and a protein subunit.

The catalysed reaction is Endonucleolytic cleavage of RNA, removing 5'-extranucleotides from tRNA precursor.. RNaseP catalyzes the removal of the 5'-leader sequence from pre-tRNA to produce the mature 5'-terminus. It can also cleave other RNA substrates such as 4.5S RNA. The protein component plays an auxiliary but essential role in vivo by binding to the 5'-leader sequence and broadening the substrate specificity of the ribozyme. This Pectobacterium atrosepticum (strain SCRI 1043 / ATCC BAA-672) (Erwinia carotovora subsp. atroseptica) protein is Ribonuclease P protein component.